A 219-amino-acid polypeptide reads, in one-letter code: Membrin-12 (219 aa).

Ala2 carries the N-acetylalanine modification. The Cytoplasmic portion of the chain corresponds to 2–197; it reads ASGTVGGLSE…LIERRNRVDT (196 aa). A helical; Anchor for type IV membrane protein membrane pass occupies residues 198–215; it reads WIKYAGMIATLVILYLFI. Topologically, residues 216-219 are vesicular; the sequence is RWTR.

It belongs to the GOSR2 family.

The protein resides in the golgi apparatus membrane. Functionally, involved in transport of proteins from the cis/medial-Golgi to the trans-Golgi network. The chain is Membrin-12 (MEMB12) from Arabidopsis thaliana (Mouse-ear cress).